The sequence spans 517 residues: Synaptic vesicular amine transporter (517 aa).

The Cytoplasmic portion of the chain corresponds to 1–20; it reads MALSDLVLLRWLRDSRHSRK. A helical transmembrane segment spans residues 21–41; that stretch reads LILFIVFLALLLDNMLLTVVV. The Extracellular portion of the chain corresponds to 42 to 132; sequence PIIPSYLYSI…EDKDLLNENV (91 aa). N-linked (GlcNAc...) asparagine glycans are attached at residues N56, N83, N84, N91, and N113. A disordered region spans residues 100–119; that stretch reads ESPKATTTQHTVTNTTVPPD. Over residues 105 to 115 the composition is skewed to low complexity; it reads TTTQHTVTNTT. The cysteines at positions 120 and 327 are disulfide-linked. A helical transmembrane segment spans residues 133–153; that stretch reads QVGLLFASKATVQLLTNPFIG. Residues 154-162 lie on the Cytoplasmic side of the membrane; it reads LLTNRIGYP. The helical transmembrane segment at 163–183 threads the bilayer; that stretch reads IPMFAGFCIMFISTVMFAFSS. Residues 184-192 are Extracellular-facing; sequence SYAFLLIAR. Residues 193 to 213 traverse the membrane as a helical segment; that stretch reads SLQGIGSSCSSVAGMGMLASV. Over 214-222 the chain is Cytoplasmic; that stretch reads YTDDEERGN. A helical membrane pass occupies residues 223–245; it reads AMGIALGGLAMGVLVGPPFGSVL. The serotonin site is built by L231 and V235. At 246–251 the chain is on the extracellular side; the sequence is YEFVGK. Residues 252–274 traverse the membrane as a helical segment; it reads TAPFLVLAALVLLDGAIQLFVLQ. Residues 275–294 lie on the Cytoplasmic side of the membrane; the sequence is PSRVQPESQKGTPLTTLLKD. The chain crosses the membrane as a helical span at residues 295 to 314; it reads PYILIAAGSICFANMGIAML. Serotonin is bound by residues N308, I311, E315, F337, and Y344. At 315–331 the chain is on the extracellular side; that stretch reads EPALPIWMMETMCSRKW. A helical transmembrane segment spans residues 332–355; that stretch reads QLGVAFLPASISYLIGTNIFGILA. Topologically, residues 356-360 are cytoplasmic; that stretch reads HKMGR. Residues 361–381 traverse the membrane as a helical segment; sequence WLCALLGMIVVGISILCIPFA. Residues 382–392 lie on the Extracellular side of the membrane; it reads KNIYGLIAPNF. Residues 393–413 form a helical membrane-spanning segment; the sequence is GVGFAIGMVDSSMMPIMGYLV. D402 is a binding site for serotonin. At 414 to 417 the chain is on the cytoplasmic side; sequence DLRH. A helical membrane pass occupies residues 418–438; it reads VSVYGSVYAIADVAFCMGYAI. A serotonin-binding site is contributed by Y436. The Extracellular portion of the chain corresponds to 439–443; that stretch reads GPSAG. A helical transmembrane segment spans residues 444–465; sequence GAIAKAIGFPWLMTIIGIIDIV. Topologically, residues 466–517 are cytoplasmic; it reads FAPLCFFLRSPPAKEEKMAILMDHNCPIKTKMYTQNNVQPYPVGDDEESESD. S514 and S516 each carry phosphoserine; by CK2.

It belongs to the major facilitator superfamily. Vesicular transporter family. In terms of assembly, interacts with SLC6A3. Expressed in striata and substantia nigra.

Its subcellular location is the cytoplasmic vesicle. It is found in the secretory vesicle. The protein localises to the synaptic vesicle membrane. It localises to the secretory vesicle membrane. The protein resides in the cell projection. Its subcellular location is the axon. It is found in the dendrite. It carries out the reaction serotonin(in) + 2 H(+)(out) = serotonin(out) + 2 H(+)(in). The enzyme catalyses dopamine(in) + 2 H(+)(out) = dopamine(out) + 2 H(+)(in). It catalyses the reaction histamine(in) + 2 H(+)(out) = histamine(out) + 2 H(+)(in). Its activity is regulated as follows. Strongly inhibited by reserpine and tetrabenazine. Also inhibited to a lesser extent by ketanserin and fenfluramine. Reserpine and ketanserin inhibit by blocking the substrate-binding pocket. Tetrabenazine traps SLC18A2/VMAT2 in an occluded conformation and its inhibition is specific to SLC18A2/VMAT2 but not SLC18A1/VMAT1. Functionally, electrogenic antiporter that exchanges one cationic monoamine with two intravesicular protons across the membrane of secretory and synaptic vesicles. Uses the electrochemical proton gradient established by the V-type proton-pump ATPase to accumulate high concentrations of monoamines inside the vesicles prior to their release via exocytosis. Transports a variety of catecholamines such as dopamine, adrenaline and noradrenaline, histamine, and indolamines such as serotonin. Regulates the transvesicular monoaminergic gradient that determines the quantal size. Mediates somatodendritic dopamine release in hippocampal neurons, likely as part of a regulated secretory pathway that integrates retrograde synaptic signals. Acts as a primary transporter for striatal dopamine loading ensuring impulse-dependent release of dopamine at the synaptic cleft. Responsible for histamine and serotonin storage and subsequent corelease from mast cell granules. The protein is Synaptic vesicular amine transporter (Slc18a2) of Mus musculus (Mouse).